Consider the following 457-residue polypeptide: Bifunctional protein GlmU (457 aa).

Residues 1 to 229 (MYNCAIILAA…YEEIMGVNSR (229 aa)) form a pyrophosphorylase region. UDP-N-acetyl-alpha-D-glucosamine-binding positions include 8-11 (LAAG), Lys22, Gln73, and 78-79 (GT). Asp103 is a Mg(2+) binding site. Residues Gly140, Glu155, Asn170, and Asn227 each contribute to the UDP-N-acetyl-alpha-D-glucosamine site. Position 227 (Asn227) interacts with Mg(2+). Residues 230-250 (VQLSEAEIVMRKRINHKHMVN) are linker. Positions 251–457 (GVTFIDCEST…WLDKKGLLKK (207 aa)) are N-acetyltransferase. UDP-N-acetyl-alpha-D-glucosamine is bound by residues Arg332 and Lys350. His362 serves as the catalytic Proton acceptor. UDP-N-acetyl-alpha-D-glucosamine contacts are provided by Tyr365 and Asn376. Residues 385–386 (NY), Ala422, and Arg439 contribute to the acetyl-CoA site.

It in the N-terminal section; belongs to the N-acetylglucosamine-1-phosphate uridyltransferase family. The protein in the C-terminal section; belongs to the transferase hexapeptide repeat family. As to quaternary structure, homotrimer. Requires Mg(2+) as cofactor.

It localises to the cytoplasm. The catalysed reaction is alpha-D-glucosamine 1-phosphate + acetyl-CoA = N-acetyl-alpha-D-glucosamine 1-phosphate + CoA + H(+). It catalyses the reaction N-acetyl-alpha-D-glucosamine 1-phosphate + UTP + H(+) = UDP-N-acetyl-alpha-D-glucosamine + diphosphate. The protein operates within nucleotide-sugar biosynthesis; UDP-N-acetyl-alpha-D-glucosamine biosynthesis; N-acetyl-alpha-D-glucosamine 1-phosphate from alpha-D-glucosamine 6-phosphate (route II): step 2/2. It participates in nucleotide-sugar biosynthesis; UDP-N-acetyl-alpha-D-glucosamine biosynthesis; UDP-N-acetyl-alpha-D-glucosamine from N-acetyl-alpha-D-glucosamine 1-phosphate: step 1/1. Its pathway is bacterial outer membrane biogenesis; LPS lipid A biosynthesis. Catalyzes the last two sequential reactions in the de novo biosynthetic pathway for UDP-N-acetylglucosamine (UDP-GlcNAc). The C-terminal domain catalyzes the transfer of acetyl group from acetyl coenzyme A to glucosamine-1-phosphate (GlcN-1-P) to produce N-acetylglucosamine-1-phosphate (GlcNAc-1-P), which is converted into UDP-GlcNAc by the transfer of uridine 5-monophosphate (from uridine 5-triphosphate), a reaction catalyzed by the N-terminal domain. The sequence is that of Bifunctional protein GlmU from Clostridium botulinum (strain Langeland / NCTC 10281 / Type F).